The chain runs to 266 residues: Glucosamine-6-phosphate deaminase (266 aa).

Asp-72 (proton acceptor; for enolization step) is an active-site residue. Asp-141 (for ring-opening step) is an active-site residue. His-143 functions as the Proton acceptor; for ring-opening step in the catalytic mechanism. Glu-148 (for ring-opening step) is an active-site residue.

The protein belongs to the glucosamine/galactosamine-6-phosphate isomerase family. NagB subfamily. In terms of assembly, homohexamer.

It catalyses the reaction alpha-D-glucosamine 6-phosphate + H2O = beta-D-fructose 6-phosphate + NH4(+). It participates in amino-sugar metabolism; N-acetylneuraminate degradation; D-fructose 6-phosphate from N-acetylneuraminate: step 5/5. Allosterically activated by N-acetylglucosamine 6-phosphate (GlcNAc6P). Functionally, catalyzes the reversible isomerization-deamination of glucosamine 6-phosphate (GlcN6P) to form fructose 6-phosphate (Fru6P) and ammonium ion. The polypeptide is Glucosamine-6-phosphate deaminase (Klebsiella pneumoniae subsp. pneumoniae (strain ATCC 700721 / MGH 78578)).